The sequence spans 618 residues: DnaJ homolog subfamily C member 2 (618 aa).

One can recognise a J domain in the interval 85–158 (DHYAVLGLAH…VKRRAFDSVD (74 aa)). Disordered stretches follow at residues 281–315 (KEEE…QQEE), 330–349 (QAAQ…IKKE), and 419–448 (LQKE…QNNR). Residues 428–448 (QAQQAARGSEHSSAAGGQNNR) are compositionally biased toward polar residues. SANT domains lie at 445–507 (QNNR…KLDP) and 548–603 (SNAA…EMIK).

Component of ribosome-associated complex (RAC).

The protein resides in the nucleus. It is found in the cytoplasm. Its subcellular location is the cytosol. In terms of biological role, acts both as a chaperone in the cytosol and as a chromatin regulator in the nucleus. When cytosolic, acts as a molecular chaperone: component of the ribosome-associated complex (RAC), a complex involved in folding or maintaining nascent polypeptides in a folding-competent state. When nuclear, mediates the switching from polycomb-repressed genes to an active state: specifically recruited at histone H2A ubiquitinated at 'Lys-119' (H2AK119ub), and promotes the displacement of the polycomb PRC1 complex from chromatin, thereby facilitating transcription activation. The protein is DnaJ homolog subfamily C member 2 (dnajc2) of Danio rerio (Zebrafish).